A 348-amino-acid chain; its full sequence is 3-isopropylmalate dehydrogenase (348 aa).

76-87 contributes to the NAD(+) binding site; that stretch reads GPKWTDPNNRPE. Residues R94, R104, R132, and D217 each coordinate substrate. Residues D217, D241, and D245 each coordinate Mg(2+). 275-287 contributes to the NAD(+) binding site; that stretch reads GSAPDIAGKNVAN.

This sequence belongs to the isocitrate and isopropylmalate dehydrogenases family. LeuB type 1 subfamily. In terms of assembly, homodimer. It depends on Mg(2+) as a cofactor. The cofactor is Mn(2+).

The protein resides in the cytoplasm. The enzyme catalyses (2R,3S)-3-isopropylmalate + NAD(+) = 4-methyl-2-oxopentanoate + CO2 + NADH. It participates in amino-acid biosynthesis; L-leucine biosynthesis; L-leucine from 3-methyl-2-oxobutanoate: step 3/4. Catalyzes the oxidation of 3-carboxy-2-hydroxy-4-methylpentanoate (3-isopropylmalate) to 3-carboxy-4-methyl-2-oxopentanoate. The product decarboxylates to 4-methyl-2 oxopentanoate. This Staphylococcus aureus (strain bovine RF122 / ET3-1) protein is 3-isopropylmalate dehydrogenase.